Reading from the N-terminus, the 736-residue chain is 1,4-alpha-glucan branching enzyme GlgB (736 aa).

The active-site Nucleophile is the Asp415. Residue Glu468 is the Proton donor of the active site.

Belongs to the glycosyl hydrolase 13 family. GlgB subfamily. As to quaternary structure, monomer.

It carries out the reaction Transfers a segment of a (1-&gt;4)-alpha-D-glucan chain to a primary hydroxy group in a similar glucan chain.. Its pathway is glycan biosynthesis; glycogen biosynthesis. Functionally, catalyzes the formation of the alpha-1,6-glucosidic linkages in glycogen by scission of a 1,4-alpha-linked oligosaccharide from growing alpha-1,4-glucan chains and the subsequent attachment of the oligosaccharide to the alpha-1,6 position. The sequence is that of 1,4-alpha-glucan branching enzyme GlgB from Rhodopirellula baltica (strain DSM 10527 / NCIMB 13988 / SH1).